The primary structure comprises 651 residues: Histone-lysine N-methyltransferase family member SUVH2 (651 aa).

A disordered region spans residues 1–28 (MSTLLPFPDLNLMPDSQSSTAGTTAGDT). Low complexity predominate over residues 15 to 28 (DSQSSTAGTTAGDT). Residues 202–358 (DKHIVGPVTG…KFRLVRIEGQ (157 aa)) enclose the YDG domain. A Pre-SET domain is found at 434-492 (TGCECKLSCTDDCLCARKNGGEFAYDDNGHLLKGKHVVFECGEFCTCGPSCKSRVTQKG). Residues Cys-436, Cys-438, Cys-442, Cys-446, Cys-448, Cys-474, Cys-478, Cys-480, and Cys-484 each coordinate Zn(2+). In terms of domain architecture, SET spans 495 to 638 (NRLEVFRSKE…PLAELSLDYG (144 aa)).

Belongs to the class V-like SAM-binding methyltransferase superfamily. Histone-lysine methyltransferase family. Suvar3-9 subfamily. In terms of assembly, self-interacts. Interacts with DNA-directed RNA polymerase V subunit NRPE1 and with DRD1 and DMS3. Binds to MORC1/CRT1. Expressed at low levels in leaves stems and flowers.

The protein localises to the nucleus. The protein resides in the chromosome. Its subcellular location is the centromere. Its function is as follows. Histone methyltransferase family member that plays a central role in gene silencing. Together with MORC6 and SUVH9, regulates the silencing of some transposable elements (TEs). According to PubMed:15775980, it is required for normal methylation of 'Lys-9' and 'Lys-27' of histone H3, 'Lys-20' of H4, and cytosine, but PubMed:19043555 see no significant effect on histone methylation when the gene is mutated. According to PubMed:19043555, the protein does not bind S-adenosyl-L-methionine and lacks methyltransferase activity. Instead, it may function downstream of DRM2 in RNA-directed DNA methylation, binding to methylated DNA and recruiting DNA-directed RNA polymerase V to chromatin. In Arabidopsis thaliana (Mouse-ear cress), this protein is Histone-lysine N-methyltransferase family member SUVH2 (SUVH2).